We begin with the raw amino-acid sequence, 130 residues long: Ribonuclease VapC46 (130 aa).

The region spanning 4–118 is the PINc domain; that stretch reads IYLDSSAIVK…CTYDDRMRDA (115 aa). Positions 7 and 91 each coordinate Mg(2+).

The protein belongs to the PINc/VapC protein family. Mg(2+) is required as a cofactor.

Functionally, toxic component of a type II toxin-antitoxin (TA) system. An RNase. Upon expression in M.smegmatis inhibits colony formation. Its toxic effect is neutralized by coexpression with cognate antitoxin VapB46. The polypeptide is Ribonuclease VapC46 (Mycobacterium tuberculosis (strain ATCC 25618 / H37Rv)).